We begin with the raw amino-acid sequence, 657 residues long: Probable intron-encoded endonuclease aI2 (657 aa).

Positions M1 to G245 are COX1 exons 1 to 2 encoded. The next 6 helical transmembrane spans lie at I19–V39, L69–L89, L103–L123, A152–V172, P188–L208, and M269–V289. The COX1 intron 2 encoded stretch occupies residues Q246–F657.

The protein in the C-terminal section; belongs to the LAGLIDADG endonuclease family. It in the N-terminal section; belongs to the heme-copper respiratory oxidase family. Post-translationally, the mature protein may arise from proteolytic cleavage of an in-frame translation of COX1 exons 1 and 2 plus intron 2, containing the aI2 open reading frame.

The protein localises to the mitochondrion. It is found in the membrane. Functionally, mitochondrial DNA endonuclease involved in intron homing. The polypeptide is Probable intron-encoded endonuclease aI2 (aI2) (Debaryomyces hansenii (strain ATCC 36239 / CBS 767 / BCRC 21394 / JCM 1990 / NBRC 0083 / IGC 2968) (Yeast)).